A 105-amino-acid polypeptide reads, in one-letter code: Large ribosomal subunit protein uL24 (105 aa).

The protein belongs to the universal ribosomal protein uL24 family. In terms of assembly, part of the 50S ribosomal subunit.

Its function is as follows. One of two assembly initiator proteins, it binds directly to the 5'-end of the 23S rRNA, where it nucleates assembly of the 50S subunit. Functionally, one of the proteins that surrounds the polypeptide exit tunnel on the outside of the subunit. The chain is Large ribosomal subunit protein uL24 from Leptothrix cholodnii (strain ATCC 51168 / LMG 8142 / SP-6) (Leptothrix discophora (strain SP-6)).